We begin with the raw amino-acid sequence, 354 residues long: Uroporphyrinogen decarboxylase (354 aa).

Substrate contacts are provided by residues 27–31 (RQAGR), aspartate 77, tyrosine 154, threonine 209, and histidine 327.

Belongs to the uroporphyrinogen decarboxylase family. In terms of assembly, homodimer.

Its subcellular location is the cytoplasm. It carries out the reaction uroporphyrinogen III + 4 H(+) = coproporphyrinogen III + 4 CO2. It functions in the pathway porphyrin-containing compound metabolism; protoporphyrin-IX biosynthesis; coproporphyrinogen-III from 5-aminolevulinate: step 4/4. Functionally, catalyzes the decarboxylation of four acetate groups of uroporphyrinogen-III to yield coproporphyrinogen-III. The sequence is that of Uroporphyrinogen decarboxylase from Salmonella dublin (strain CT_02021853).